Reading from the N-terminus, the 637-residue chain is Chaperone protein dnaK2 (637 aa).

Threonine 197 is modified (phosphothreonine; by autocatalysis). The disordered stretch occupies residues 602–637; it reads AAAGGAAPGGDAGASAASGGGDASDDVIDAEFTETK. Residues 603-623 are compositionally biased toward gly residues; it reads AAGGAAPGGDAGASAASGGGD. A compositionally biased stretch (acidic residues) spans 624 to 637; sequence ASDDVIDAEFTETK.

This sequence belongs to the heat shock protein 70 family.

Acts as a chaperone. This chain is Chaperone protein dnaK2 (dnaK2), found in Parasynechococcus marenigrum (strain WH8102).